A 400-amino-acid polypeptide reads, in one-letter code: Large envelope protein (400 aa).

Position 1 is an N-acetylmethionine (M1). 2 disordered regions span residues 1 to 20 (MGGW…SVPN) and 88 to 115 (VSTI…LRDS). The N-myristoyl glycine; by host moiety is linked to residue G2. Residues 2 to 119 (GGWSSKPRKG…PPLRDSHPQA (118 aa)) are pre-S1. Positions 2 to 174 (GGWSSKPRKG…SARTGDPVTN (173 aa)) are pre-S. Topologically, residues 2 to 181 (GGWSSKPRKG…VTNMENITSG (180 aa)) are virion surface; in external conformation. The Intravirion; in internal conformation portion of the chain corresponds to 2–253 (GGWSSKPRKG…PGYRWMCLRR (252 aa)). W4 is a glycosylation site (N-linked (GlcNAc...) asparagine). Residues 88-106 (VSTIPPPASTNRQSGRQPT) show a composition bias toward polar residues. The segment at 120–174 (MQWNSTAFHQTLQDPRVRGLYLPAGGSSSGTVNPAPNIASHISSISARTGDPVTN) is pre-S2. The helical transmembrane segment at 182–202 (FLGPLLVLQAGFFLLTRILTI) threads the bilayer. At 203-253 (PQSLDSWWTSLNFLGGSPVCLGQNSQSPTSNHSPTSCPPICPGYRWMCLRR) the chain is on the intravirion; in external conformation side. The chain crosses the membrane as a helical span at residues 254 to 274 (FIIFLFILLLCLIFLLVLLDY). The Virion surface segment spans residues 275 to 348 (QGMLPVCPLI…WASVRFSWLS (74 aa)). N320 carries an N-linked (GlcNAc...) asparagine; by host glycan. A helical membrane pass occupies residues 349 to 369 (LLVPFVQWFVGLSPTVWLSAI). Residues 370–375 (WMMWYW) lie on the Intravirion side of the membrane. Residues 376–398 (GPSLYSIVRPFIPLLPIFFCLWV) traverse the membrane as a helical segment. Residues 399 to 400 (YI) are Virion surface-facing.

It belongs to the orthohepadnavirus major surface antigen family. In terms of assembly, in its internal form (Li-HBsAg), interacts with the capsid protein and with the isoform S. Interacts with host chaperone CANX. Associates with host chaperone CANX through its pre-S2 N glycan; this association may be essential for isoform M proper secretion. As to quaternary structure, interacts with isoform L. Interacts with the antigens of satellite virus HDV (HDVAgs); this interaction is required for encapsidation of HDV genomic RNA. Post-translationally, isoform M is N-terminally acetylated by host at a ratio of 90%, and N-glycosylated by host at the pre-S2 region. Myristoylated.

It localises to the virion membrane. The large envelope protein exists in two topological conformations, one which is termed 'external' or Le-HBsAg and the other 'internal' or Li-HBsAg. In its external conformation the protein attaches the virus to cell receptors and thereby initiating infection. This interaction determines the species specificity and liver tropism. This attachment induces virion internalization predominantly through caveolin-mediated endocytosis. The large envelope protein also assures fusion between virion membrane and endosomal membrane. In its internal conformation the protein plays a role in virion morphogenesis and mediates the contact with the nucleocapsid like a matrix protein. In terms of biological role, the middle envelope protein plays an important role in the budding of the virion. It is involved in the induction of budding in a nucleocapsid independent way. In this process the majority of envelope proteins bud to form subviral lipoprotein particles of 22 nm of diameter that do not contain a nucleocapsid. This is Large envelope protein from Homo sapiens (Human).